The chain runs to 372 residues: UDP-N-acetylglucosamine--N-acetylmuramyl-(pentapeptide) pyrophosphoryl-undecaprenol N-acetylglucosamine transferase (372 aa).

UDP-N-acetyl-alpha-D-glucosamine is bound by residues 21–23 (TAG), N135, R172, S206, and Q303.

Belongs to the glycosyltransferase 28 family. MurG subfamily.

The protein localises to the cell membrane. The catalysed reaction is di-trans,octa-cis-undecaprenyl diphospho-N-acetyl-alpha-D-muramoyl-L-alanyl-D-glutamyl-meso-2,6-diaminopimeloyl-D-alanyl-D-alanine + UDP-N-acetyl-alpha-D-glucosamine = di-trans,octa-cis-undecaprenyl diphospho-[N-acetyl-alpha-D-glucosaminyl-(1-&gt;4)]-N-acetyl-alpha-D-muramoyl-L-alanyl-D-glutamyl-meso-2,6-diaminopimeloyl-D-alanyl-D-alanine + UDP + H(+). Its pathway is cell wall biogenesis; peptidoglycan biosynthesis. Its function is as follows. Cell wall formation. Catalyzes the transfer of a GlcNAc subunit on undecaprenyl-pyrophosphoryl-MurNAc-pentapeptide (lipid intermediate I) to form undecaprenyl-pyrophosphoryl-MurNAc-(pentapeptide)GlcNAc (lipid intermediate II). The chain is UDP-N-acetylglucosamine--N-acetylmuramyl-(pentapeptide) pyrophosphoryl-undecaprenol N-acetylglucosamine transferase from Paenarthrobacter aurescens (strain TC1).